A 337-amino-acid chain; its full sequence is Adenylosuccinate synthetase (337 aa).

GTP is bound by residues 12-18 and 42-44; these read GDEGKGK and GHT. The Proton acceptor role is filled by Asp13. Residues Asp13 and Gly42 each contribute to the Mg(2+) site. Residues 13 to 16, 40 to 43, Thr127, Arg141, Gln179, Thr194, and Arg256 contribute to the IMP site; these read DEGK and NAGH. The active-site Proton donor is His43. 252–258 provides a ligand contact to substrate; sequence TVTGRRR. GTP is bound by residues Arg258, 284-286, and 324-326; these read CLD and STG.

The protein belongs to the adenylosuccinate synthetase family. As to quaternary structure, homodimer. Requires Mg(2+) as cofactor.

It localises to the cytoplasm. The catalysed reaction is IMP + L-aspartate + GTP = N(6)-(1,2-dicarboxyethyl)-AMP + GDP + phosphate + 2 H(+). It functions in the pathway purine metabolism; AMP biosynthesis via de novo pathway; AMP from IMP: step 1/2. In terms of biological role, plays an important role in the de novo pathway of purine nucleotide biosynthesis. Catalyzes the first committed step in the biosynthesis of AMP from IMP. This is Adenylosuccinate synthetase from Methanococcus maripaludis (strain C6 / ATCC BAA-1332).